Consider the following 724-residue polypeptide: Pre-mRNA-splicing factor CLF1 (724 aa).

HAT repeat units lie at residues 55–87 (EFQARKRTEFESRIRYSRDSILAWTKYAQWEAS), 89–121 (NEYERSRSVFERALDVDPRSVDLWIKYTDMELK), 123–155 (RNINHARNLFDRAITLLPRVDALWYKYVYLEEL), 157–188 (LNVSGARQIFERWMQWEPNDKAWQSYIKLEER), 190–221 (NELDRASAIYERWIACRPIPKNWVAWAKFEED), 223–262 (GQPDKAREVFQTALEFFGDEEEQVEKAQSVFAAFARMETR), 264–298 (KEFERARVIYKFALARLPRSKSASLYAQYTKFEKQ), 308–340 (TVLGKRRIQYEEELAYDPTNYDAWFSLARLEED), 352–386 (VEPMRVREVYERAVANVPPALEKRYWRRYIYLWLQ), 396–432 (KDYDRARDVYKAAVKLVPHKTFTFAKLWLAYAYFEIR), 434–465 (LDVSAARKVLGAGIGMCPKPKLFTGYIELEMR), 467–499 (REFDRVRTLYEKFLTYDPSLSSAWIQWTQVESA), 501–534 (EDFERVRAIFELAVQQSLDMPEIVWKAYIDFEAG), 536–567 (GERERARNLYERLLERTSHVKVWISYALMEIA), 585–626 (GDAD…EHGD), and 635–667 (DMLPTTRKRWRKAEDGSGELEEYWDLVFPDDEK). Positions 681 to 724 (QAWAQQRAGQGEEGGLSYDLPSDSESENEDEDGDNREEEGMDQD) are disordered. Residues 702-724 (SDSESENEDEDGDNREEEGMDQD) are compositionally biased toward acidic residues.

The protein belongs to the crooked-neck family. Associated with the spliceosome.

The protein resides in the nucleus. Functionally, involved in pre-mRNA splicing and cell cycle progression. Required for the spliceosome assembly and initiation of the DNA replication. This is Pre-mRNA-splicing factor CLF1 (CLF1) from Cryptococcus neoformans var. grubii serotype A (strain H99 / ATCC 208821 / CBS 10515 / FGSC 9487) (Filobasidiella neoformans var. grubii).